The primary structure comprises 428 residues: tRNA modification GTPase MnmE (428 aa).

Arg20, Glu76, and Arg116 together coordinate (6S)-5-formyl-5,6,7,8-tetrahydrofolate. Residues 212–351 (GFEVAIIGAP…LVEALQDRLL (140 aa)) form the TrmE-type G domain. A K(+)-binding site is contributed by Asn222. Residues 222–227 (NAGKST), 241–247 (SEVAGTT), and 266–269 (DTAG) contribute to the GTP site. Ser226 is a Mg(2+) binding site. Residues Ser241, Val243, and Thr246 each coordinate K(+). Thr247 contributes to the Mg(2+) binding site. Lys428 serves as a coordination point for (6S)-5-formyl-5,6,7,8-tetrahydrofolate.

Belongs to the TRAFAC class TrmE-Era-EngA-EngB-Septin-like GTPase superfamily. TrmE GTPase family. As to quaternary structure, homodimer. Heterotetramer of two MnmE and two MnmG subunits. The cofactor is K(+).

The protein resides in the cytoplasm. In terms of biological role, exhibits a very high intrinsic GTPase hydrolysis rate. Involved in the addition of a carboxymethylaminomethyl (cmnm) group at the wobble position (U34) of certain tRNAs, forming tRNA-cmnm(5)s(2)U34. The polypeptide is tRNA modification GTPase MnmE (Cereibacter sphaeroides (strain ATCC 17025 / ATH 2.4.3) (Rhodobacter sphaeroides)).